The following is a 77-amino-acid chain: Conotoxin King-Kong 2 (77 aa).

The first 22 residues, 1 to 22 (MKLTCMMIVAVLFLTAWTFVTA), serve as a signal peptide directing secretion. The propeptide occupies 23–49 (DDSGNGLENLFSKAHHEMKNPEASNLN). Cystine bridges form between C52–C67, C59–C71, and C66–C76. C76 carries the cysteine amide modification.

This sequence belongs to the conotoxin O1 superfamily. As to expression, expressed by the venom duct.

It is found in the secreted. This Conus textile (Cloth-of-gold cone) protein is Conotoxin King-Kong 2.